Here is a 309-residue protein sequence, read N- to C-terminus: Aspartate carbamoyltransferase catalytic subunit (309 aa).

Arginine 56 and threonine 57 together coordinate carbamoyl phosphate. Lysine 84 serves as a coordination point for L-aspartate. Carbamoyl phosphate-binding residues include arginine 106, histidine 136, and glutamine 139. L-aspartate is bound by residues arginine 169 and arginine 221. Positions 264 and 265 each coordinate carbamoyl phosphate.

It belongs to the aspartate/ornithine carbamoyltransferase superfamily. ATCase family. In terms of assembly, heterododecamer (2C3:3R2) of six catalytic PyrB chains organized as two trimers (C3), and six regulatory PyrI chains organized as three dimers (R2).

The enzyme catalyses carbamoyl phosphate + L-aspartate = N-carbamoyl-L-aspartate + phosphate + H(+). It functions in the pathway pyrimidine metabolism; UMP biosynthesis via de novo pathway; (S)-dihydroorotate from bicarbonate: step 2/3. Its function is as follows. Catalyzes the condensation of carbamoyl phosphate and aspartate to form carbamoyl aspartate and inorganic phosphate, the committed step in the de novo pyrimidine nucleotide biosynthesis pathway. The polypeptide is Aspartate carbamoyltransferase catalytic subunit (Limosilactobacillus reuteri subsp. reuteri (strain JCM 1112) (Lactobacillus reuteri)).